We begin with the raw amino-acid sequence, 380 residues long: Histidinol-phosphate aminotransferase 1 (380 aa).

Lys-235 is modified (N6-(pyridoxal phosphate)lysine).

This sequence belongs to the class-II pyridoxal-phosphate-dependent aminotransferase family. Histidinol-phosphate aminotransferase subfamily. In terms of assembly, homodimer. Pyridoxal 5'-phosphate is required as a cofactor.

It catalyses the reaction L-histidinol phosphate + 2-oxoglutarate = 3-(imidazol-4-yl)-2-oxopropyl phosphate + L-glutamate. It participates in amino-acid biosynthesis; L-histidine biosynthesis; L-histidine from 5-phospho-alpha-D-ribose 1-diphosphate: step 7/9. This is Histidinol-phosphate aminotransferase 1 from Psychrobacter arcticus (strain DSM 17307 / VKM B-2377 / 273-4).